The following is a 311-amino-acid chain: L-lactate dehydrogenase 2 (311 aa).

Positions 14, 35, and 40 each coordinate NAD(+). Arg-90 lines the substrate pocket. NAD(+) is bound by residues Ser-103, 120–122 (ATN), and Thr-145. 122–125 (NPCD) is a binding site for substrate. 150–153 (DTTR) lines the substrate pocket. Catalysis depends on His-177, which acts as the Proton acceptor. Residue Thr-230 coordinates substrate.

It belongs to the LDH/MDH superfamily. LDH family. As to quaternary structure, homotetramer.

It is found in the cytoplasm. It carries out the reaction (S)-lactate + NAD(+) = pyruvate + NADH + H(+). It functions in the pathway fermentation; pyruvate fermentation to lactate; (S)-lactate from pyruvate: step 1/1. Functionally, catalyzes the conversion of lactate to pyruvate. The polypeptide is L-lactate dehydrogenase 2 (Listeria monocytogenes serotype 4b (strain F2365)).